Reading from the N-terminus, the 576-residue chain is Plant intracellular Ras-group-related LRR protein 4 (576 aa).

Positions 130–151 (AAPAAATTTTSTAAAGSSSSSA) are enriched in low complexity. A disordered region spans residues 130-181 (AAPAAATTTTSTAAAGSSSSSAVGNAERHASSGTNGFTASRVAGTSTSTGRV). Residues 160–180 (SSGTNGFTASRVAGTSTSTGR) show a composition bias toward polar residues. LRR repeat units follow at residues 272 to 295 (LTGL…IGKL), 296 to 318 (FSLA…IGDL), 320 to 341 (SLIY…IGRL), 342 to 364 (LNLE…IGSL), 366 to 387 (RLKK…IGHC), 389 to 410 (SLVE…VGKL), 411 to 433 (EPLE…MASL), 434 to 456 (TKLK…FCFA), 458 to 481 (SLIK…IGNL), 482 to 503 (EMLE…SFGN), and 505 to 527 (KHLR…IALK). Residues 528–535 (GAQAVVQY) carry the GVYW; degenerate motif.

Belongs to the SHOC2 family. In terms of tissue distribution, widely expressed.

Leucine-rich repeat protein that likely mediates protein interactions, possibly in the context of signal transduction. This chain is Plant intracellular Ras-group-related LRR protein 4 (IRL4), found in Oryza sativa subsp. japonica (Rice).